The following is a 142-amino-acid chain: Large ribosomal subunit protein uL13 (142 aa).

Belongs to the universal ribosomal protein uL13 family. Part of the 50S ribosomal subunit.

This protein is one of the early assembly proteins of the 50S ribosomal subunit, although it is not seen to bind rRNA by itself. It is important during the early stages of 50S assembly. The sequence is that of Large ribosomal subunit protein uL13 from Ralstonia nicotianae (strain ATCC BAA-1114 / GMI1000) (Ralstonia solanacearum).